The chain runs to 291 residues: Verruculogen synthase (291 aa).

Residue Tyr-68 is part of the active site.

The protein belongs to the PhyH family. In terms of assembly, homodimer. Requires Fe cation as cofactor.

It catalyses the reaction fumitremorgin B + 2-oxoglutarate + AH2 + 2 O2 = verruculogen + succinate + A + CO2 + H2O. It participates in mycotoxin biosynthesis. Its function is as follows. Verruculogen synthase; part of the gene cluster that mediates the biosynthesis of fumitremorgins, indole alkaloids that carry not only intriguing chemical structures, but also interesting biological and pharmacological activities. The biosynthesis of fumitremorgin-type alkaloids begins by condensation of the two amino acids L-tryptophan and L-proline to brevianamide F, catalyzed by the non-ribosomal peptide synthetase ftmA. Brevianamide F is then prenylated by the prenyltransferase ftmPT1/ftmB in the presence of dimethylallyl diphosphate, resulting in the formation of tryprostatin B. The three cytochrome P450 monooxygenases, ftmP450-1/ftmC, ftmP450-2/ftmE and ftmP450-3/FtmG, are responsible for the conversion of tryprostatin B to 6-hydroxytryprostatin B, tryprostatin A to fumitremorgin C and fumitremorgin C to 12,13-dihydroxyfumitremorgin C, respectively. The putative methyltransferase ftmMT/ftmD is expected for the conversion of 6-hydroxytryprostatin B to tryprostatin A. FtmPT2/FtmH catalyzes the prenylation of 12,13-dihydroxyfumitre-morgin C in the presence of dimethylallyl diphosphate, resulting in the formation of fumitremorgin B. Fumitremorgin B is further converted to verruculogen by ftmOx1/ftmF via the insertion of an endoperoxide bond between the two prenyl moieties. In some fungal species, verruculogen is further converted to fumitremorgin A, but the enzymes involved in this step have not been identified yet. The sequence is that of Verruculogen synthase from Aspergillus fumigatus (strain ATCC MYA-4609 / CBS 101355 / FGSC A1100 / Af293) (Neosartorya fumigata).